The primary structure comprises 175 residues: Inorganic pyrophosphatase (175 aa).

3 residues coordinate substrate: Lys30, Arg44, and Tyr56. Mg(2+) contacts are provided by Asp66, Asp71, and Asp103. Tyr142 provides a ligand contact to substrate.

It belongs to the PPase family. In terms of assembly, homohexamer. Mg(2+) is required as a cofactor.

It localises to the cytoplasm. It carries out the reaction diphosphate + H2O = 2 phosphate + H(+). Its function is as follows. Catalyzes the hydrolysis of inorganic pyrophosphate (PPi) forming two phosphate ions. This is Inorganic pyrophosphatase from Ralstonia nicotianae (strain ATCC BAA-1114 / GMI1000) (Ralstonia solanacearum).